Here is a 473-residue protein sequence, read N- to C-terminus: Photosystem II CP43 reaction center protein (473 aa).

Residues 1–14 (MKTLYSLRRFYHVE) constitute a propeptide that is removed on maturation. Thr15 is modified (N-acetylthreonine). Residue Thr15 is modified to Phosphothreonine. 5 consecutive transmembrane segments (helical) span residues 69-93 (LFEVAHFVPEKPMYEQGLILLPHLA), 134-155 (LLGPETLEESFPFFGYVWKDRN), 178-200 (KALYFGGVYDTWAPGGGDVRKIT), 255-275 (KPFAWARRALVWSGEAYLSYS), and 291-312 (WFNNTAYPSEFYGPTGPEASQA). Position 367 (Glu367) interacts with [CaMn4O5] cluster. A helical transmembrane segment spans residues 447 to 471 (RARAAAAGFEKGIDRDFEPVLSMTP).

The protein belongs to the PsbB/PsbC family. PsbC subfamily. PSII is composed of 1 copy each of membrane proteins PsbA, PsbB, PsbC, PsbD, PsbE, PsbF, PsbH, PsbI, PsbJ, PsbK, PsbL, PsbM, PsbT, PsbX, PsbY, PsbZ, Psb30/Ycf12, at least 3 peripheral proteins of the oxygen-evolving complex and a large number of cofactors. It forms dimeric complexes. Requires Binds multiple chlorophylls and provides some of the ligands for the Ca-4Mn-5O cluster of the oxygen-evolving complex. It may also provide a ligand for a Cl- that is required for oxygen evolution. PSII binds additional chlorophylls, carotenoids and specific lipids. as cofactor.

It localises to the plastid. Its subcellular location is the chloroplast thylakoid membrane. In terms of biological role, one of the components of the core complex of photosystem II (PSII). It binds chlorophyll and helps catalyze the primary light-induced photochemical processes of PSII. PSII is a light-driven water:plastoquinone oxidoreductase, using light energy to abstract electrons from H(2)O, generating O(2) and a proton gradient subsequently used for ATP formation. The protein is Photosystem II CP43 reaction center protein of Aethionema cordifolium (Lebanon stonecress).